The following is a 94-amino-acid chain: ESAT-6-like protein EsxI (94 aa).

This sequence belongs to the WXG100 family. ESAT-6 subfamily.

The protein localises to the secreted. The sequence is that of ESAT-6-like protein EsxI from Mycobacterium tuberculosis (strain CDC 1551 / Oshkosh).